The following is an 804-amino-acid chain: MNHDSKITPIMQQYMMLKSQYKEYLLFYRLGDFYELFFDDAIETSRILNIVLTKKGNVPMCGVPFHSSESYLNRLVKLGYKIAICEQLETSEEAKKRGYKALVKRDVVRIVTPGTILEDSLLEAKENNYLSCIVNVDHNYAIAWLELSTGLFYYHTTELHKLDSDLFRINPKEVLISDKLVELDSIYSILRKYKFSVTQYSGSFFDVSRSYNTLCNVYGISTLKGLGDLKNEEIAVCGSLLEYVKATQKGNLPQLEFPKAYSKGDFMFIDAAALRNLELFCTQSGDLEGSLISSIDYTITACGGRLLKRCLSAPLACSHAINRRLDIVEFFVNDRTLCRGVRETLRGIADIERILTRIKVGKCSPKDLYALKLTLDKIFVLLDLLHKFDSSVVGDFCSRLGKYDDLCKTLDDVLIPNNVNNVKDGGFINPDYDAQLSEYIYIQSYSNDLIQELRDKYRNITNIQSLKILYNNILGYYVEVSSSYLISDKDFIHRQTLANSIRYTTSELKALESKIISARDAAINLEVKIFGQLCTCIIEVADKITMTAHAIAEIDMLTSFAELAIQYSYTKPIVDDSYEFNIKKGRHPVVERNGKFVANDIDLSLMQRVHLITGPNMAGKSTFLRQNALIGILAHIGSFVPAQHAHIGVIDKVFSRVGASDNIASGHSTFMVEMTETAAIINQATDKSFVILDEIGRGTGTYDGLSIAWSVIEQIHNVNKSRAIFATHYHELSKLDRYLENIKCFCMKVEEWNGKVVFLHEIIPGSTNKSYGIHVAKLAGFPQSVLDRAEDLMSKLKANEDLLT.

Residue 614–621 participates in ATP binding; sequence GPNMAGKS.

It belongs to the DNA mismatch repair MutS family.

In terms of biological role, this protein is involved in the repair of mismatches in DNA. It is possible that it carries out the mismatch recognition step. This protein has a weak ATPase activity. In Ehrlichia chaffeensis (strain ATCC CRL-10679 / Arkansas), this protein is DNA mismatch repair protein MutS.